Reading from the N-terminus, the 399-residue chain is Homoserine O-acetyltransferase (399 aa).

Positions 63–372 constitute an AB hydrolase-1 domain; that stretch reads NAILVCHALT…TDRGHDAFLL (310 aa). S168 serves as the catalytic Nucleophile. R238 provides a ligand contact to substrate. Residues D334 and H367 contribute to the active site. D368 lines the substrate pocket.

The protein belongs to the AB hydrolase superfamily. MetX family. Homodimer.

It is found in the cytoplasm. It carries out the reaction L-homoserine + acetyl-CoA = O-acetyl-L-homoserine + CoA. It participates in amino-acid biosynthesis; L-methionine biosynthesis via de novo pathway; O-acetyl-L-homoserine from L-homoserine: step 1/1. Functionally, transfers an acetyl group from acetyl-CoA to L-homoserine, forming acetyl-L-homoserine. This is Homoserine O-acetyltransferase from Nitrobacter hamburgensis (strain DSM 10229 / NCIMB 13809 / X14).